The chain runs to 146 residues: Ribosome-binding factor A (146 aa).

The segment at 122-146 (QQQFGSVDDVTENDIDEADDTEGKA) is disordered. Over residues 130–146 (DVTENDIDEADDTEGKA) the composition is skewed to acidic residues.

The protein belongs to the RbfA family. In terms of assembly, monomer. Binds 30S ribosomal subunits, but not 50S ribosomal subunits or 70S ribosomes.

It localises to the cytoplasm. Its function is as follows. One of several proteins that assist in the late maturation steps of the functional core of the 30S ribosomal subunit. Associates with free 30S ribosomal subunits (but not with 30S subunits that are part of 70S ribosomes or polysomes). Required for efficient processing of 16S rRNA. May interact with the 5'-terminal helix region of 16S rRNA. This is Ribosome-binding factor A from Shewanella sp. (strain MR-7).